The following is a 750-amino-acid chain: Methylmalonyl-CoA mutase, mitochondrial (750 aa).

The N-terminal 32 residues, 1 to 32 (MLRAKNQLFLLSPHYLRQVKESSGSRLIQQRL), are a transit peptide targeting the mitochondrion. Residue Gln50 participates in malonyl-CoA binding. The residue at position 89 (Lys89) is an N6-acetyllysine. Residues 96-99 (YPTM) and 106-110 (TIRQY) each bind malonyl-CoA. N6-acetyllysine is present on Lys212. Residues 216-218 (TIQ), Arg228, Lys255, His265, and 304-306 (RLS) each bind malonyl-CoA. Lys335 carries the N6-acetyllysine modification. Position 343 is an N6-succinyllysine (Lys343). A Phosphoserine modification is found at Ser481. Lys595 bears the N6-succinyllysine mark. An N6-acetyllysine modification is found at Lys602. A B12-binding domain is found at 614–746 (RPRLLVAKMG…DDIEKCLEKK (133 aa)). Adenosylcob(III)alamin is bound at residue His627.

The protein belongs to the methylmalonyl-CoA mutase family. In terms of assembly, homodimer. Interacts (the apoenzyme form) with MMAA; the interaction is GTP dependent. It depends on adenosylcob(III)alamin as a cofactor.

It is found in the mitochondrion matrix. The protein localises to the mitochondrion. The protein resides in the cytoplasm. It carries out the reaction (R)-methylmalonyl-CoA = succinyl-CoA. With respect to regulation, during catalysis, accumulation of oxidized inactive cofactor hydroxocobalamin (OH2Cbl) leads to loss of MMUT activity. Interaction with MMAA decreases the rate of OH2Cbl formation and promotes the replacement of OH2Cbl by the active cofactor adenosylcobalamin (AdoCbl), thereby restoring MMUT activity. Inhibited by itaconyl-CoA, a metabolite that inactivates the coenzyme B12 cofactor. Inhibited at high concentration of substrate. Functionally, catalyzes the reversible isomerization of methylmalonyl-CoA (MMCoA) (generated from branched-chain amino acid metabolism and degradation of dietary odd chain fatty acids and cholesterol) to succinyl-CoA (3-carboxypropionyl-CoA), a key intermediate of the tricarboxylic acid cycle. The chain is Methylmalonyl-CoA mutase, mitochondrial from Homo sapiens (Human).